Consider the following 98-residue polypeptide: Plastocyanin (98 aa).

Residues 1–98 enclose the Plastocyanin-like domain; that stretch reads DVTVKLGADS…AGMKGTITVQ (98 aa). 4 residues coordinate Cu cation: His-38, Cys-83, His-86, and Met-91.

It belongs to the plastocyanin family. The cofactor is Cu(2+).

The protein resides in the plastid. It localises to the chloroplast thylakoid membrane. Its function is as follows. Participates in electron transfer between P700 and the cytochrome b6-f complex in photosystem I. This Scenedesmus fuscus (Green alga) protein is Plastocyanin (petE).